The primary structure comprises 286 residues: 3-methyl-2-oxobutanoate hydroxymethyltransferase (286 aa).

The Mg(2+) site is built by Asp67 and Asp106. 3-methyl-2-oxobutanoate contacts are provided by residues 67-68 (DS), Asp106, and Lys136. Glu138 is a Mg(2+) binding site. Glu204 serves as the catalytic Proton acceptor.

This sequence belongs to the PanB family. As to quaternary structure, homodecamer; pentamer of dimers. Requires Mg(2+) as cofactor.

Its subcellular location is the cytoplasm. It carries out the reaction 3-methyl-2-oxobutanoate + (6R)-5,10-methylene-5,6,7,8-tetrahydrofolate + H2O = 2-dehydropantoate + (6S)-5,6,7,8-tetrahydrofolate. The protein operates within cofactor biosynthesis; (R)-pantothenate biosynthesis; (R)-pantoate from 3-methyl-2-oxobutanoate: step 1/2. In terms of biological role, catalyzes the reversible reaction in which hydroxymethyl group from 5,10-methylenetetrahydrofolate is transferred onto alpha-ketoisovalerate to form ketopantoate. The polypeptide is 3-methyl-2-oxobutanoate hydroxymethyltransferase (Mycobacterium leprae (strain TN)).